The primary structure comprises 1050 residues: uncharacterized protein (1050 aa).

The Cytoplasmic segment spans residues 1–83 (MARLLTKSSQ…AVKLGTFEGC (83 aa)). Phosphoserine occurs at positions 9 and 60. Thr64 bears the Phosphothreonine mark. A helical transmembrane segment spans residues 84–104 (FIPTTLNVLSILLYLRFPWII). The Extracellular portion of the chain corresponds to 105–112 (GEAGVLKT). A helical transmembrane segment spans residues 113 to 133 (LLMLFISYAVGIFTSLSISAI). Residues 134-146 (CTNGMVRGGGAYY) are Cytoplasmic-facing. The chain crosses the membrane as a helical span at residues 147 to 169 (AVSRSIGPELGGSIGLIFYVGQI). Residues 170–202 (LNTGMNISGFVEPIISIFGKESGTISQFLPEGY) lie on the Extracellular side of the membrane. Asn175 is a glycosylation site (N-linked (GlcNAc...) asparagine). A helical membrane pass occupies residues 203–223 (WWVFLYTTCVLAMCCILCCLG). Residues 224–232 (SAIFAKASN) are Cytoplasmic-facing. The helical transmembrane segment at 233–253 (ALFVVIILSTISIPISSIFVH) threads the bilayer. The Extracellular segment spans residues 254 to 295 (PFKDPSLLVHFTGLKWSTLMKNLASAYTENEKGTGYESFKST). Phosphoserine is present on Ser270. At Thr271 the chain carries Phosphothreonine. A helical transmembrane segment spans residues 296 to 316 (FGVFFPATAGLLAGASMSGDL). The Cytoplasmic segment spans residues 317 to 334 (KAPSRSIPKGTISSQATT). A helical membrane pass occupies residues 335 to 355 (FLLYLLVILCVGASVTRTGLL). The Extracellular segment spans residues 356–368 (LDMDVMEHISLHP). Residues 369–389 (LFIISGILSSGAFSSFMGIFG) traverse the membrane as a helical segment. Residues 390–417 (AAKLLQAIARDDLIPGMFFFAKGSSYDD) are Cytoplasmic-facing. Residues 418–438 (IPYVAIGVTYLITQISLFWDI) form a helical membrane-spanning segment. The Extracellular segment spans residues 439-442 (NMLS). The chain crosses the membrane as a helical span at residues 443–463 (SMITMTFLLTFGFINLSCFLL). Residues 464–480 (RISSTPNFRPTFRYFNR) are Cytoplasmic-facing. Residues 481–497 (RTTLVGTILSFGVMFYV) traverse the membrane as a helical segment. Residues 498–499 (DR) are Extracellular-facing. Residues 500–520 (LNAFISFLIAGILVVVIYFTC) traverse the membrane as a helical segment. Over 521-1050 (PPKNWGDVSQ…SKSLTITTAL (530 aa)) the chain is Cytoplasmic. Ser901 is modified (phosphoserine). Positions 915 to 943 (ETESSFGNRSLSPKQENRRTYSDSTIESS) are disordered. A compositionally biased stretch (polar residues) spans 916-928 (TESSFGNRSLSPK). Ser936 is modified (phosphoserine). The residue at position 939 (Thr939) is a Phosphothreonine.

The protein belongs to the SLC12A transporter family.

It localises to the membrane. This is an uncharacterized protein from Schizosaccharomyces pombe (strain 972 / ATCC 24843) (Fission yeast).